Here is a 144-residue protein sequence, read N- to C-terminus: uncharacterized protein (144 aa).

This sequence belongs to the mimivirus L885/R898 family.

This is an uncharacterized protein from Acanthamoeba polyphaga (Amoeba).